The sequence spans 122 residues: Ribosome-binding factor A (122 aa).

This sequence belongs to the RbfA family. As to quaternary structure, monomer. Binds 30S ribosomal subunits, but not 50S ribosomal subunits or 70S ribosomes.

The protein resides in the cytoplasm. One of several proteins that assist in the late maturation steps of the functional core of the 30S ribosomal subunit. Associates with free 30S ribosomal subunits (but not with 30S subunits that are part of 70S ribosomes or polysomes). Required for efficient processing of 16S rRNA. May interact with the 5'-terminal helix region of 16S rRNA. This is Ribosome-binding factor A from Streptococcus agalactiae serotype III (strain NEM316).